Here is a 243-residue protein sequence, read N- to C-terminus: Ribonuclease 3 (243 aa).

The RNase III domain occupies 15–144 (NDTISKIINY…LIGAIYIDGG (130 aa)). Residue glutamate 57 participates in Mg(2+) binding. Aspartate 61 is a catalytic residue. The Mg(2+) site is built by asparagine 130 and glutamate 133. Residue glutamate 133 is part of the active site. The 70-residue stretch at 169–238 (DPKTSLQEWT…AELMLEKINN (70 aa)) folds into the DRBM domain.

The protein belongs to the ribonuclease III family. As to quaternary structure, homodimer. Requires Mg(2+) as cofactor.

It is found in the cytoplasm. It carries out the reaction Endonucleolytic cleavage to 5'-phosphomonoester.. Digests double-stranded RNA. Involved in the processing of primary rRNA transcript to yield the immediate precursors to the large and small rRNAs (23S and 16S). Processes some mRNAs, and tRNAs when they are encoded in the rRNA operon. Processes pre-crRNA and tracrRNA of type II CRISPR loci if present in the organism. In Wolbachia sp. subsp. Brugia malayi (strain TRS), this protein is Ribonuclease 3.